The primary structure comprises 100 residues: MAKNKLRGPKSRNVFHIASQKNFKAKNKAKPVTTNLKKINIMNEEKVNRVNKAFVNVQKELAHFAKSISLEPLQKELIPQQRHESKPVNVDEATRLMALL.

The residue at position 19 (S19) is a Phosphoserine. K21 bears the N6-acetyllysine mark. S69 carries the phosphoserine modification.

As to quaternary structure, associates with the pre-60S ribosomal particles.

The protein resides in the nucleus. Its subcellular location is the nucleolus. In terms of biological role, trans-acting factor in ribosome biogenesis required for efficient 40S and 60S subunit production. The polypeptide is Ribosomal biogenesis factor (RBIS) (Bos taurus (Bovine)).